Consider the following 454-residue polypeptide: UDP-N-acetylmuramoylalanine--D-glutamate ligase (454 aa).

117 to 123 contributes to the ATP binding site; it reads GTNGKTT.

It belongs to the MurCDEF family.

The protein localises to the cytoplasm. It catalyses the reaction UDP-N-acetyl-alpha-D-muramoyl-L-alanine + D-glutamate + ATP = UDP-N-acetyl-alpha-D-muramoyl-L-alanyl-D-glutamate + ADP + phosphate + H(+). The protein operates within cell wall biogenesis; peptidoglycan biosynthesis. Cell wall formation. Catalyzes the addition of glutamate to the nucleotide precursor UDP-N-acetylmuramoyl-L-alanine (UMA). This Alkaliphilus oremlandii (strain OhILAs) (Clostridium oremlandii (strain OhILAs)) protein is UDP-N-acetylmuramoylalanine--D-glutamate ligase.